Consider the following 253-residue polypeptide: Acetylglutamate kinase (253 aa).

Residues 37 to 38 (GG), Arg59, and Asn149 each bind substrate.

This sequence belongs to the acetylglutamate kinase family. ArgB subfamily.

It is found in the cytoplasm. It catalyses the reaction N-acetyl-L-glutamate + ATP = N-acetyl-L-glutamyl 5-phosphate + ADP. The protein operates within amino-acid biosynthesis; L-arginine biosynthesis; N(2)-acetyl-L-ornithine from L-glutamate: step 2/4. Its function is as follows. Catalyzes the ATP-dependent phosphorylation of N-acetyl-L-glutamate. The chain is Acetylglutamate kinase from Rubrobacter xylanophilus (strain DSM 9941 / JCM 11954 / NBRC 16129 / PRD-1).